The chain runs to 823 residues: DNA topoisomerase 4 subunit A (823 aa).

The Topo IIA-type catalytic domain maps to 30–496 (LPDIRDGLKP…KAIEIDTASL (467 aa)). The active-site O-(5'-phospho-DNA)-tyrosine intermediate is the Tyr118.

This sequence belongs to the type II topoisomerase GyrA/ParC subunit family. ParC type 2 subfamily. In terms of assembly, heterotetramer composed of ParC and ParE.

The protein resides in the cell membrane. It carries out the reaction ATP-dependent breakage, passage and rejoining of double-stranded DNA.. With respect to regulation, inhibited by quinolones, such as levofloxacin. Its function is as follows. Topoisomerase IV is essential for chromosome segregation. It relaxes supercoiled DNA. Performs the decatenation events required during the replication of a circular DNA molecule. This is DNA topoisomerase 4 subunit A from Streptococcus pneumoniae serotype 4 (strain ATCC BAA-334 / TIGR4).